We begin with the raw amino-acid sequence, 276 residues long: Hydroxyethylthiazole kinase (276 aa).

Residue methionine 48 coordinates substrate. ATP contacts are provided by arginine 124 and threonine 175. Glycine 202 is a substrate binding site.

This sequence belongs to the Thz kinase family. Requires Mg(2+) as cofactor.

The enzyme catalyses 5-(2-hydroxyethyl)-4-methylthiazole + ATP = 4-methyl-5-(2-phosphooxyethyl)-thiazole + ADP + H(+). It functions in the pathway cofactor biosynthesis; thiamine diphosphate biosynthesis; 4-methyl-5-(2-phosphoethyl)-thiazole from 5-(2-hydroxyethyl)-4-methylthiazole: step 1/1. Catalyzes the phosphorylation of the hydroxyl group of 4-methyl-5-beta-hydroxyethylthiazole (THZ). The protein is Hydroxyethylthiazole kinase of Clostridium beijerinckii (strain ATCC 51743 / NCIMB 8052) (Clostridium acetobutylicum).